The following is a 152-amino-acid chain: SsrA-binding protein (152 aa).

It belongs to the SmpB family.

The protein localises to the cytoplasm. Its function is as follows. Required for rescue of stalled ribosomes mediated by trans-translation. Binds to transfer-messenger RNA (tmRNA), required for stable association of tmRNA with ribosomes. tmRNA and SmpB together mimic tRNA shape, replacing the anticodon stem-loop with SmpB. tmRNA is encoded by the ssrA gene; the 2 termini fold to resemble tRNA(Ala) and it encodes a 'tag peptide', a short internal open reading frame. During trans-translation Ala-aminoacylated tmRNA acts like a tRNA, entering the A-site of stalled ribosomes, displacing the stalled mRNA. The ribosome then switches to translate the ORF on the tmRNA; the nascent peptide is terminated with the 'tag peptide' encoded by the tmRNA and targeted for degradation. The ribosome is freed to recommence translation, which seems to be the essential function of trans-translation. The polypeptide is SsrA-binding protein (Rickettsia conorii (strain ATCC VR-613 / Malish 7)).